Reading from the N-terminus, the 440-residue chain is Xaa-Pro dipeptidase (440 aa).

Mn(2+) contacts are provided by Asp246, Asp257, His337, Glu382, and Glu421.

The protein belongs to the peptidase M24B family. Bacterial-type prolidase subfamily. The cofactor is Mn(2+).

It carries out the reaction Xaa-L-Pro dipeptide + H2O = an L-alpha-amino acid + L-proline. In terms of biological role, splits dipeptides with a prolyl residue in the C-terminal position. This chain is Xaa-Pro dipeptidase, found in Aeromonas hydrophila subsp. hydrophila (strain ATCC 7966 / DSM 30187 / BCRC 13018 / CCUG 14551 / JCM 1027 / KCTC 2358 / NCIMB 9240 / NCTC 8049).